The following is a 402-amino-acid chain: 1-deoxy-D-xylulose 5-phosphate reductoisomerase (402 aa).

Threonine 10, glycine 11, serine 12, isoleucine 13, glycine 36, arginine 37, asparagine 38, and asparagine 124 together coordinate NADPH. Lysine 125 is a 1-deoxy-D-xylulose 5-phosphate binding site. Glutamate 126 contributes to the NADPH binding site. A Mn(2+)-binding site is contributed by aspartate 150. 1-deoxy-D-xylulose 5-phosphate contacts are provided by serine 151, glutamate 152, serine 186, and histidine 209. Position 152 (glutamate 152) interacts with Mn(2+). Glycine 215 is an NADPH binding site. Serine 222, asparagine 227, lysine 228, and glutamate 231 together coordinate 1-deoxy-D-xylulose 5-phosphate. Glutamate 231 lines the Mn(2+) pocket.

It belongs to the DXR family. Mg(2+) is required as a cofactor. Mn(2+) serves as cofactor.

It carries out the reaction 2-C-methyl-D-erythritol 4-phosphate + NADP(+) = 1-deoxy-D-xylulose 5-phosphate + NADPH + H(+). The protein operates within isoprenoid biosynthesis; isopentenyl diphosphate biosynthesis via DXP pathway; isopentenyl diphosphate from 1-deoxy-D-xylulose 5-phosphate: step 1/6. With respect to regulation, inhibited by fosmidomycin. Catalyzes the NADPH-dependent rearrangement and reduction of 1-deoxy-D-xylulose-5-phosphate (DXP) to 2-C-methyl-D-erythritol 4-phosphate (MEP). The chain is 1-deoxy-D-xylulose 5-phosphate reductoisomerase from Synechococcus sp. (strain ATCC 27144 / PCC 6301 / SAUG 1402/1) (Anacystis nidulans).